Consider the following 142-residue polypeptide: HTH-type transcriptional regulator MntR (142 aa).

The region spanning 1–63 (MPTPSMEDYI…YEKYRGLVLT (63 aa)) is the HTH dtxR-type domain. Residues aspartate 8, glutamate 11, histidine 77, glutamate 99, glutamate 102, and histidine 103 each contribute to the Mn(2+) site.

Belongs to the DtxR/MntR family. In terms of assembly, homodimer.

It localises to the cytoplasm. DNA binding is strongly activated by Mn(2+). Functionally, central regulator of manganese homeostasis. The chain is HTH-type transcriptional regulator MntR from Bacillus mycoides (strain KBAB4) (Bacillus weihenstephanensis).